The following is a 70-amino-acid chain: Cold shock-like protein CspJ (70 aa).

Residues 7–67 (GLVKWFNPEK…GPKGPSAVNV (61 aa)) enclose the CSD domain.

It is found in the cytoplasm. This Salmonella typhi protein is Cold shock-like protein CspJ (cspJ).